Consider the following 479-residue polypeptide: Preferentially expressed antigen in melanoma-like protein 7 (479 aa).

The stretch at 96–124 (MGRLKKVDFRDAQHHASLDMQDEREGRDY) is one LRR 1; degenerate repeat. Residues 179–203 (HLCCEKLEIGAVEVSKVRNVLKFLQ) form an LRR 2; degenerate repeat. The stretch at 204–230 (PELIKELKLNTVGNLSKLAKFVPFIRK) is one LRR 3; degenerate repeat. The stretch at 231–265 (MRNLQKLMLVRTFGTRTFTQEEKQNISKIISLFCK) is one LRR 4; degenerate repeat. LRR repeat units lie at residues 266–291 (LSCLRHLTIDDVYFLTDQMKELLRCL), 292–323 (EAPLVSLKITLCQLSQSDLESFAQRWNYSQLK), 324–347 (HLCLRGVTLTNLDVTPLRDFLKRV), 348–375 (AANLQTLDLEDCRMDDSHFRTLLPALIK), and 376–400 (CTQLTSINLYDNDISEDVLENFLHR).

It belongs to the PRAME family. Interacts with UHRF1. Seems to be specific to pluripotent tissues in the early embryo. Not detected in somatic tissues.

Functionally, promotes maintenance and self-renewal of pluripotent embryonic stem cells (ESCs), downstream of LIF/STAT3. Maintains the pluripotency state of ESCs by repressing DNA methylation through the regulation of UHRF1 stability. Mediates the proteasomal degradation of UHRF1. Is required for the establishment of the blastocyst. The polypeptide is Preferentially expressed antigen in melanoma-like protein 7 (Mus musculus (Mouse)).